Consider the following 178-residue polypeptide: Large ribosomal subunit protein uL6 (178 aa).

Belongs to the universal ribosomal protein uL6 family. As to quaternary structure, part of the 50S ribosomal subunit.

In terms of biological role, this protein binds to the 23S rRNA, and is important in its secondary structure. It is located near the subunit interface in the base of the L7/L12 stalk, and near the tRNA binding site of the peptidyltransferase center. The protein is Large ribosomal subunit protein uL6 of Francisella philomiragia subsp. philomiragia (strain ATCC 25017 / CCUG 19701 / FSC 153 / O#319-036).